A 500-amino-acid polypeptide reads, in one-letter code: MAMMGQLWTNTGSALATLMFVYTIFKQFFPLFGPQLEPFLYRLFGRFYPYIQITFHEYSGEHFKRSEAYLGIQSYLSKDSSARAKKLKANTTKGSKSIVLSMDDKEEITDDFEGIRVWWQSKKEGATRQSFSFYPEANEKRYYMLRFHRRDREVIIERYLEHVMREGKTIEQKNRERKLYSNTPGQSHGNNSKWSHVTFEHPATFDTLAMEENKKEEIKSDLIKFSKSKDYYKKIGKAWKRGYLLFGPPGTGKSTMIAAMANFLEYDVYDLELTTVKDNTHLRRLLIETSAKSIIVIEDIDCSLNLTGQRKKKEEEEEDGDDKNTIEKKMMMKNEGENKESKVTLSGLLNFIDGLWSACGGERIIVFTTNFVDKLDPALIRKGRMDKHIEMSYCCFEAFKVLAKNYLDVEESEMFEEIKRLLEVEEIKMTPADVGENLLPKSEKEGGETCLKRLIEALKEEKEEAKKKVEEEEEEKQRKKEKVKEIEAEKEKKKKIEEEN.

A helical membrane pass occupies residues 7–29; sequence LWTNTGSALATLMFVYTIFKQFF. Positions 174–193 are disordered; it reads NRERKLYSNTPGQSHGNNSK. A compositionally biased stretch (polar residues) spans 180 to 193; that stretch reads YSNTPGQSHGNNSK. Residue 247–254 participates in ATP binding; that stretch reads GPPGTGKS. The interval 462-500 is disordered; it reads KEEAKKKVEEEEEEKQRKKEKVKEIEAEKEKKKKIEEEN.

Belongs to the AAA ATPase family. BCS1 subfamily. The cofactor is Mg(2+).

The protein resides in the membrane. The catalysed reaction is ATP + H2O = ADP + phosphate + H(+). In Arabidopsis thaliana (Mouse-ear cress), this protein is AAA-ATPase At3g28580.